Reading from the N-terminus, the 329-residue chain is Porphobilinogen deaminase (329 aa).

C250 carries the post-translational modification S-(dipyrrolylmethanemethyl)cysteine.

This sequence belongs to the HMBS family. As to quaternary structure, monomer. Dipyrromethane is required as a cofactor.

The catalysed reaction is 4 porphobilinogen + H2O = hydroxymethylbilane + 4 NH4(+). It functions in the pathway porphyrin-containing compound metabolism; protoporphyrin-IX biosynthesis; coproporphyrinogen-III from 5-aminolevulinate: step 2/4. Its function is as follows. Tetrapolymerization of the monopyrrole PBG into the hydroxymethylbilane pre-uroporphyrinogen in several discrete steps. The polypeptide is Porphobilinogen deaminase (Burkholderia mallei (strain NCTC 10247)).